A 288-amino-acid chain; its full sequence is ATP synthase gamma chain (288 aa).

It belongs to the ATPase gamma chain family. In terms of assembly, F-type ATPases have 2 components, CF(1) - the catalytic core - and CF(0) - the membrane proton channel. CF(1) has five subunits: alpha(3), beta(3), gamma(1), delta(1), epsilon(1). CF(0) has three main subunits: a, b and c.

It is found in the cell membrane. Produces ATP from ADP in the presence of a proton gradient across the membrane. The gamma chain is believed to be important in regulating ATPase activity and the flow of protons through the CF(0) complex. In Staphylococcus saprophyticus subsp. saprophyticus (strain ATCC 15305 / DSM 20229 / NCIMB 8711 / NCTC 7292 / S-41), this protein is ATP synthase gamma chain.